The following is a 160-amino-acid chain: Triabin (160 aa).

A signal peptide spans 1-18 (MKTIIAVTIFGILTCAYA). 3 disulfide bridges follow: Cys24-Cys128, Cys57-Cys160, and Cys87-Cys102.

Belongs to the calycin superfamily. Triabin family. Expressed in salivary glands.

Its subcellular location is the secreted. In terms of biological role, thrombin inhibitor. Forms a non-covalent complex with thrombin at a molar ratio of 1:1. Inhibits thrombin-induced platelet aggregation. Prolongs thrombin clotting time and activated partial thromboplastin time. It only minimally suppresses the amidolytic activity of thrombin. Inhibits thrombin-mediated fibrin formation in the host. Inhibits thrombin-induced endothelium-dependent relaxant and contractile responses in host blood vessels. Inhibits thrombin-induced mitogenesis in host vascular smooth muscle cells. The chain is Triabin from Meccus pallidipennis (Triatomine bug).